The following is a 420-amino-acid chain: Probable protein phosphatase 2C 73 (420 aa).

The PPM-type phosphatase domain maps to 33-336; the sequence is GVSMHTKQGW…DDCAVVCLFL (304 aa). D69 and G70 together coordinate Mn(2+). Over residues 96–105 the composition is skewed to polar residues; it reads LKTEQDPSSN. Residues 96–119 are disordered; the sequence is LKTEQDPSSNTDKETLEKSDCTSL. A compositionally biased stretch (basic and acidic residues) spans 106-115; sequence TDKETLEKSD. D281 and D327 together coordinate Mn(2+).

The protein belongs to the PP2C family. Mg(2+) serves as cofactor. Requires Mn(2+) as cofactor.

It catalyses the reaction O-phospho-L-seryl-[protein] + H2O = L-seryl-[protein] + phosphate. The catalysed reaction is O-phospho-L-threonyl-[protein] + H2O = L-threonyl-[protein] + phosphate. This chain is Probable protein phosphatase 2C 73, found in Oryza sativa subsp. japonica (Rice).